A 256-amino-acid polypeptide reads, in one-letter code: Type III pantothenate kinase (256 aa).

Asp-7–Val-14 contacts ATP. Position 108-111 (Gly-108–Cys-111) interacts with substrate. Residue Asp-110 is the Proton acceptor of the active site. Position 130 (Asp-130) interacts with K(+). Thr-133 provides a ligand contact to ATP. Thr-185 serves as a coordination point for substrate.

The protein belongs to the type III pantothenate kinase family. As to quaternary structure, homodimer. Requires NH4(+) as cofactor. It depends on K(+) as a cofactor.

It localises to the cytoplasm. The catalysed reaction is (R)-pantothenate + ATP = (R)-4'-phosphopantothenate + ADP + H(+). The protein operates within cofactor biosynthesis; coenzyme A biosynthesis; CoA from (R)-pantothenate: step 1/5. Functionally, catalyzes the phosphorylation of pantothenate (Pan), the first step in CoA biosynthesis. The chain is Type III pantothenate kinase from Bifidobacterium adolescentis (strain ATCC 15703 / DSM 20083 / NCTC 11814 / E194a).